We begin with the raw amino-acid sequence, 506 residues long: Cytochrome P450 4B1 (506 aa).

Glu-310 serves as a coordination point for heme. At Ser-431 the chain carries Phosphoserine. A heme-binding site is contributed by Cys-448.

This sequence belongs to the cytochrome P450 family. Requires heme as cofactor.

The protein resides in the endoplasmic reticulum membrane. Its subcellular location is the microsome membrane. The catalysed reaction is an organic molecule + reduced [NADPH--hemoprotein reductase] + O2 = an alcohol + oxidized [NADPH--hemoprotein reductase] + H2O + H(+). Its function is as follows. Cytochromes P450 are a group of heme-thiolate monooxygenases. In liver microsomes, this enzyme is involved in an NADPH-dependent electron transport pathway. It oxidizes a variety of structurally unrelated compounds, including steroids, fatty acids, and xenobiotics. The sequence is that of Cytochrome P450 4B1 (CYP4B1) from Oryctolagus cuniculus (Rabbit).